A 189-amino-acid polypeptide reads, in one-letter code: MRKIGIIGGTFDPPHYGHLLIANEVYHALNLEEVWFLPNQIPPHKQGRNITSVESRLHMLELATEAEEHFSICLEELSRKGPSYTYDTMLQLTKKYPDVQFHFIIGGDMVEYLPKWYNIEALLNLVTFVGVARPGYTLHTPYKITTVEIPEFAVSSSLLRERYKEKKTCKYLLPEKVQVYIERNGLYES.

Belongs to the NadD family.

It catalyses the reaction nicotinate beta-D-ribonucleotide + ATP + H(+) = deamido-NAD(+) + diphosphate. It functions in the pathway cofactor biosynthesis; NAD(+) biosynthesis; deamido-NAD(+) from nicotinate D-ribonucleotide: step 1/1. Catalyzes the reversible adenylation of nicotinate mononucleotide (NaMN) to nicotinic acid adenine dinucleotide (NaAD). This chain is Probable nicotinate-nucleotide adenylyltransferase, found in Bacillus cereus (strain B4264).